A 1388-amino-acid chain; its full sequence is DNA-directed RNA polymerase subunit beta (1388 aa).

This sequence belongs to the RNA polymerase beta chain family. The RNAP catalytic core consists of 2 alpha, 1 beta, 1 beta' and 1 omega subunit. When a sigma factor is associated with the core the holoenzyme is formed, which can initiate transcription.

It carries out the reaction RNA(n) + a ribonucleoside 5'-triphosphate = RNA(n+1) + diphosphate. Its function is as follows. DNA-dependent RNA polymerase catalyzes the transcription of DNA into RNA using the four ribonucleoside triphosphates as substrates. The chain is DNA-directed RNA polymerase subunit beta from Xylella fastidiosa (strain Temecula1 / ATCC 700964).